The primary structure comprises 89 residues: Pyrin domain-containing protein 1 (89 aa).

The Pyrin domain maps to 1 to 89 (MGTKREAILK…EEAARLQRAA (89 aa)).

Interacts with PYCARD/ASC (via pyrin domain). Post-translationally, phosphorylated. In terms of tissue distribution, predominantly expressed in monocytes, macrophages and granulocytes.

Its subcellular location is the cytoplasm. Functionally, associates with PYCARD/ASC and modulates its ability to collaborate with MEFV/pyrin and NLRP3/cryopyrin in NF-kappa-B and pro-caspase-1 activation. Suppresses kinase activity of NF-kappa-B inhibitor kinase (IKK) complex, expression of NF-kappa-B inducible genes and inhibits NF-kappa-B activation by cytokines and LPS. This is Pyrin domain-containing protein 1 from Homo sapiens (Human).